Consider the following 588-residue polypeptide: Glutathione/L-cysteine transport system ATP-binding/permease protein CydD (588 aa).

The Cytoplasmic portion of the chain corresponds to 1–15 (MNKSRQKELTRWLKQ). 2 helical membrane passes run 16–36 (QSVI…VSGI) and 37–57 (LIIA…MENI). Residues 20–306 (SQRWLNISRL…APEFFQPLRD (287 aa)) form the ABC transmembrane type-1 domain. Topologically, residues 58–136 (PREALLLPFT…LEQIDDMHDY (79 aa)) are cytoplasmic. A helical membrane pass occupies residues 137–157 (YARYLPQMALAVSVPLLIVVA). The Periplasmic segment spans residues 158–161 (IFPS). A helical membrane pass occupies residues 162–182 (NWAAALILLGTAPLIPLFMAL). Topologically, residues 183-249 (VGMGAADANR…MEVLRLAFLS (67 aa)) are cytoplasmic. Residues 250-270 (SGILEFFTSLSIALVAVYFGF) form a helical membrane-spanning segment. At 271 to 276 (SYLGEL) the chain is on the periplasmic side. Residues 277-297 (DFGHYDTGVTLAAGFLALILA) form a helical membrane-spanning segment. The Cytoplasmic portion of the chain corresponds to 298-573 (PEFFQPLRDL…QGRYAELSVA (276 aa)). The 234-residue stretch at 339–572 (EAELASTDPV…EQGRYAELSV (234 aa)) folds into the ABC transporter domain. Position 373–380 (373–380 (LPAGQRAV)) interacts with ATP.

The protein belongs to the ABC transporter superfamily. Cysteine exporter (TC 3.A.1.129.1) family. As to quaternary structure, forms a heterodimer with CydC.

Its subcellular location is the cell inner membrane. The enzyme catalyses L-cysteine(in) + ATP + H2O = L-cysteine(out) + ADP + phosphate + H(+). It catalyses the reaction glutathione(in) + ATP + H2O = glutathione(out) + ADP + phosphate + H(+). Its activity is regulated as follows. ATPase activity is stimulated by various thiol compounds. The presence of heme leads to a further enhancement of thiol-stimulated ATPase activity, although a large excess of heme inhibits activity. Glutathione transport is inhibited by sodium orthovanadate, an inhibitor of ABC-type transport systems, but not by the proton ionophore carbonyl cyanide m-chlorophenylhydrazone (CCCP). Functionally, part of the ABC transporter complex CydDC that exports the reduced low-molecular-weight thiols cysteine and glutathione to the periplasm. Export of these thiol-containing redox-active molecules may be crucial for redox homeostasis in the periplasm, permitting correct assembly of various respiratory complexes and formation of correct disulfide bonds in periplasmic and secreted proteins. CydD contains transmembrane domains (TMD), which form a pore in the inner membrane, and an ATP-binding domain (NBD), which is responsible for energy generation. Required for the assembly of functional cytochrome bd-type quinol oxidases and periplasmic c-type cytochromes. Overexpression of CydDC under anaerobic conditions also results in the formation of a heme biosynthesis-derived pigment, P-574. CydDC binds heme b, but heme is probably not transported by the complex and instead has a role in regulating ATPase activity. Conversely, a more recent study suggests an alternative function of CydDC: authors suggest that CydDC does not mediate the export of L-cysteine but rather reduces cytoplasmic L-cystine to L-cysteine. The principle function of CydDC would be to maintain the reduced state of cytoplasmic L-cysteine, thereby providing an important connection between sulfur metabolism, oxidative stress and resistance to antibiotics. The chain is Glutathione/L-cysteine transport system ATP-binding/permease protein CydD from Escherichia coli (strain K12).